Here is a 129-residue protein sequence, read N- to C-terminus: MALIYPDNLRYFDSHEYVRLDGDIAVIGISAYAIDQLGDIVFLELPEVGSTIAIGASFGTVESVKAVEEVYAPVTGEIIERNEAALEAPEILNSDPYEQGWLLKVQLTGKPDLSDSYDAAQYQALVEGQ.

One can recognise a Lipoyl-binding domain in the interval 24 to 106 (IAVIGISAYA…YEQGWLLKVQ (83 aa)). Residue Lys-65 is modified to N6-lipoyllysine.

Belongs to the GcvH family. As to quaternary structure, the glycine cleavage system is composed of four proteins: P, T, L and H. Requires (R)-lipoate as cofactor.

In terms of biological role, the glycine cleavage system catalyzes the degradation of glycine. The H protein shuttles the methylamine group of glycine from the P protein to the T protein. In Synechococcus elongatus (strain ATCC 33912 / PCC 7942 / FACHB-805) (Anacystis nidulans R2), this protein is Glycine cleavage system H protein.